A 686-amino-acid chain; its full sequence is Elongation factor G 2 (686 aa).

Residues 7-280 (TTVRNLGILA…AVVAYLPSPL (274 aa)) form the tr-type G domain. GTP-binding positions include 16 to 23 (AHVDAGKT), 80 to 84 (DTPGH), and 134 to 137 (NKMD).

Belongs to the TRAFAC class translation factor GTPase superfamily. Classic translation factor GTPase family. EF-G/EF-2 subfamily.

It localises to the cytoplasm. In terms of biological role, catalyzes the GTP-dependent ribosomal translocation step during translation elongation. During this step, the ribosome changes from the pre-translocational (PRE) to the post-translocational (POST) state as the newly formed A-site-bound peptidyl-tRNA and P-site-bound deacylated tRNA move to the P and E sites, respectively. Catalyzes the coordinated movement of the two tRNA molecules, the mRNA and conformational changes in the ribosome. This is Elongation factor G 2 (fusB) from Streptomyces coelicolor (strain ATCC BAA-471 / A3(2) / M145).